The sequence spans 1359 residues: ABC transporter C family member 1 (1359 aa).

The ABC transmembrane type-1 1 domain maps to 111-394 (NKLTIFLQIL…LPNSIQQLQS (284 aa)). The next 6 helical transmembrane spans lie at 119–139 (ILTN…IQFI), 147–167 (SFLA…SYTF), 214–234 (LLSV…MGIF), 244–264 (LALL…IMVI), 332–352 (MIFW…VLVL), and 363–383 (ITLE…IPLL). Residues 409-478 (PEIQQNHSSN…QQQQQQQQQQ (70 aa)) form a disordered region. Acidic residues predominate over residues 420 to 433 (EEEEEDEYDDDINS). Residues 440–450 (HNGSFNWNQVD) show a composition bias toward polar residues. Residues 459–478 (GNQQQQQQQQQQQQQQQQQQ) are compositionally biased toward low complexity. Positions 470–690 (QQQQQQQQQQ…IDFESIMKTK (221 aa)) constitute an ABC transporter 1 domain. 502–509 (GVVGSGKT) is an ATP binding site. In terms of domain architecture, ABC transmembrane type-1 2 spans 763–1061 (LRVYKEYFKH…LEVKMNSVER (299 aa)). The next 5 membrane-spanning stretches (helical) occupy residues 773 to 793 (GSSI…QIIY), 819 to 839 (IYLL…FMMA), 884 to 904 (VDLL…TVLV), 906 to 926 (IGIM…LIGI), and 999 to 1021 (WVAV…FSLF). Residues 1073 to 1102 (NSKINFFRNEQQEEEEEEEEEFDFDNDDYD) adopt a coiled-coil conformation. The 235-residue stretch at 1116–1350 (IEFRNVEIKY…QESRFSKLVK (235 aa)) folds into the ABC transporter 2 domain. 1150–1157 (GRTGAGKS) is a binding site for ATP.

Belongs to the ABC transporter superfamily. ABCC family. Conjugate transporter (TC 3.A.1.208) subfamily.

It localises to the membrane. In Dictyostelium discoideum (Social amoeba), this protein is ABC transporter C family member 1 (abcC1).